A 452-amino-acid chain; its full sequence is AP-4 complex subunit mu-1 (452 aa).

In terms of domain architecture, MHD spans 184 to 451; the sequence is KNEVFLDVVE…LSHSDAYVIR (268 aa).

This sequence belongs to the adaptor complexes medium subunit family. As to quaternary structure, adaptor protein complex 4 (AP-4) is a heterotetramer composed of two large adaptins (epsilon-type subunit AP4E1 and beta-type subunit AP4B1), a medium adaptin (mu-type subunit AP4M1) and a small adaptin (sigma-type AP4S1). Interacts with tyrosine-based sorting signals on the cytoplasmic tail of cargo proteins such as APP, ATG9A, LAMP2 and NAGPA. Interacts with the C-terminal domain of GRID2. Interacts with GRIA1 and GRIA2; the interaction is indirect via CACNG3. Interacts with CACNG3; CACNG3 associates GRIA1 and GRIA2 with the adaptor protein complex 4 (AP-4) to target them to the somatodendritic compartment of neurons. Interacts with HOOK1 and HOOK2; the interactions are direct, mediate the interaction between FTS-Hook-FHIP (FHF) complex and AP-4 and the perinuclear distribution of AP-4.

The protein resides in the golgi apparatus. Its subcellular location is the trans-Golgi network membrane. It is found in the early endosome. Component of the adaptor protein complex 4 (AP-4). Adaptor protein complexes are vesicle coat components involved both in vesicle formation and cargo selection. They control the vesicular transport of proteins in different trafficking pathways. AP-4 forms a non clathrin-associated coat on vesicles departing the trans-Golgi network (TGN) and may be involved in the targeting of proteins from the trans-Golgi network (TGN) to the endosomal-lysosomal system. It is also involved in protein sorting to the basolateral membrane in epithelial cells and the proper asymmetric localization of somatodendritic proteins in neurons. Within AP-4, the mu-type subunit AP4M1 is directly involved in the recognition and binding of tyrosine-based sorting signals found in the cytoplasmic part of cargos. The adaptor protein complex 4 (AP-4) may also recognize other types of sorting signal. The sequence is that of AP-4 complex subunit mu-1 from Canis lupus familiaris (Dog).